Here is a 353-residue protein sequence, read N- to C-terminus: UDP-3-O-acylglucosamine N-acyltransferase (353 aa).

The Proton acceptor role is filled by histidine 258.

This sequence belongs to the transferase hexapeptide repeat family. LpxD subfamily. Homotrimer.

It catalyses the reaction a UDP-3-O-[(3R)-3-hydroxyacyl]-alpha-D-glucosamine + a (3R)-hydroxyacyl-[ACP] = a UDP-2-N,3-O-bis[(3R)-3-hydroxyacyl]-alpha-D-glucosamine + holo-[ACP] + H(+). The protein operates within bacterial outer membrane biogenesis; LPS lipid A biosynthesis. In terms of biological role, catalyzes the N-acylation of UDP-3-O-acylglucosamine using 3-hydroxyacyl-ACP as the acyl donor. Is involved in the biosynthesis of lipid A, a phosphorylated glycolipid that anchors the lipopolysaccharide to the outer membrane of the cell. The chain is UDP-3-O-acylglucosamine N-acyltransferase from Parvibaculum lavamentivorans (strain DS-1 / DSM 13023 / NCIMB 13966).